Reading from the N-terminus, the 214-residue chain is UBX domain-containing protein 10 (214 aa).

Basic residues predominate over residues 1-13 (MHVTRPKSSKGRS). The tract at residues 1 to 79 (MHVTRPKSSK…AYDRPPEEPV (79 aa)) is disordered. Over residues 16–25 (MITNSSMIYT) the composition is skewed to polar residues. A compositionally biased stretch (low complexity) spans 49 to 60 (SLRSRAILRRSS). One can recognise a UBX domain in the interval 127 to 204 (PEESDLLLAI…GVLNKSVLCI (78 aa)).

It belongs to the UBXN10 family.

The protein resides in the cell projection. It is found in the cilium. In terms of biological role, required for ciliogenesis. Acts as a tethering factor that facilitates recruitment of vcp/p97 to the intraflagellar transport complex B (IFT-B) in cilia. This Danio rerio (Zebrafish) protein is UBX domain-containing protein 10.